Reading from the N-terminus, the 117-residue chain is Multidrug resistance protein EbrB (117 aa).

Transmembrane regions (helical) follow at residues 3–23 (GLLY…MLKL), 31–51 (WPIA…SFSL), 59–79 (AYAT…FLLF), and 81–101 (ETIS…VVVL).

This sequence belongs to the drug/metabolite transporter (DMT) superfamily. Small multidrug resistance (SMR) (TC 2.A.7.1) family. EbrA/EbrB subfamily. The efflux pump is composed of EbrA and EbrB.

It localises to the cell membrane. Its function is as follows. Part of a multidrug efflux pump. Confers resistance to cationic lipophilic dyes such as ethidium bromide, acriflavine, pyronine Y and safranin O. The efflux is probably coupled to an influx of protons. This chain is Multidrug resistance protein EbrB (ebrB), found in Bacillus subtilis (strain 168).